We begin with the raw amino-acid sequence, 378 residues long: Chorismate synthase (378 aa).

Residues 37–60 (EEEIQKDLTRRRPGQNDLTTPRDE) are disordered. Arg-47 provides a ligand contact to NADP(+). Residues 124–126 (RSS), Gly-289, 304–308 (KPTST), and Arg-330 contribute to the FMN site.

It belongs to the chorismate synthase family. In terms of assembly, homotetramer. Requires FMNH2 as cofactor.

The catalysed reaction is 5-O-(1-carboxyvinyl)-3-phosphoshikimate = chorismate + phosphate. The protein operates within metabolic intermediate biosynthesis; chorismate biosynthesis; chorismate from D-erythrose 4-phosphate and phosphoenolpyruvate: step 7/7. Functionally, catalyzes the anti-1,4-elimination of the C-3 phosphate and the C-6 proR hydrogen from 5-enolpyruvylshikimate-3-phosphate (EPSP) to yield chorismate, which is the branch point compound that serves as the starting substrate for the three terminal pathways of aromatic amino acid biosynthesis. This reaction introduces a second double bond into the aromatic ring system. The sequence is that of Chorismate synthase from Leptospira biflexa serovar Patoc (strain Patoc 1 / Ames).